The chain runs to 602 residues: Threonine--tRNA ligase (602 aa).

A catalytic region spans residues 208-499; that stretch reads DHRKLGIELK…LTEHCAGEFP (292 aa). Zn(2+) is bound by residues C300, H351, and H476.

The protein belongs to the class-II aminoacyl-tRNA synthetase family. As to quaternary structure, homodimer. The cofactor is Zn(2+).

The protein resides in the cytoplasm. The catalysed reaction is tRNA(Thr) + L-threonine + ATP = L-threonyl-tRNA(Thr) + AMP + diphosphate + H(+). In terms of biological role, catalyzes the attachment of threonine to tRNA(Thr) in a two-step reaction: L-threonine is first activated by ATP to form Thr-AMP and then transferred to the acceptor end of tRNA(Thr). Also edits incorrectly charged L-seryl-tRNA(Thr). The protein is Threonine--tRNA ligase of Campylobacter jejuni subsp. doylei (strain ATCC BAA-1458 / RM4099 / 269.97).